Consider the following 404-residue polypeptide: S-adenosylmethionine synthase (404 aa).

His-16 contributes to the ATP binding site. Asp-18 contacts Mg(2+). Position 44 (Glu-44) interacts with K(+). L-methionine contacts are provided by Glu-57 and Gln-100. Residues 100 to 110 (QSPEINQGVAR) are flexible loop. ATP contacts are provided by residues 177-179 (DGK), Asp-257, 263-264 (RK), Ala-280, and Lys-284. Asp-257 is an L-methionine binding site. Lys-288 contacts L-methionine.

This sequence belongs to the AdoMet synthase family. In terms of assembly, homotetramer; dimer of dimers. Mg(2+) is required as a cofactor. The cofactor is K(+).

Its subcellular location is the cytoplasm. The enzyme catalyses L-methionine + ATP + H2O = S-adenosyl-L-methionine + phosphate + diphosphate. Its pathway is amino-acid biosynthesis; S-adenosyl-L-methionine biosynthesis; S-adenosyl-L-methionine from L-methionine: step 1/1. In terms of biological role, catalyzes the formation of S-adenosylmethionine (AdoMet) from methionine and ATP. The overall synthetic reaction is composed of two sequential steps, AdoMet formation and the subsequent tripolyphosphate hydrolysis which occurs prior to release of AdoMet from the enzyme. This Bifidobacterium adolescentis (strain ATCC 15703 / DSM 20083 / NCTC 11814 / E194a) protein is S-adenosylmethionine synthase.